Here is a 228-residue protein sequence, read N- to C-terminus: Uridylate kinase (228 aa).

9–10 contributes to the ATP binding site; it reads GS. Position 44 (glycine 44) interacts with UMP. Glycine 45 and arginine 49 together coordinate ATP. UMP is bound by residues aspartate 66 and 114–120; that span reads IVAAQTT. Threonine 140, tyrosine 146, and aspartate 149 together coordinate ATP.

Belongs to the UMP kinase family. As to quaternary structure, homohexamer.

It localises to the cytoplasm. The enzyme catalyses UMP + ATP = UDP + ADP. It participates in pyrimidine metabolism; CTP biosynthesis via de novo pathway; UDP from UMP (UMPK route): step 1/1. Inhibited by UTP. Functionally, catalyzes the reversible phosphorylation of UMP to UDP. The chain is Uridylate kinase from Haloarcula marismortui (strain ATCC 43049 / DSM 3752 / JCM 8966 / VKM B-1809) (Halobacterium marismortui).